A 111-amino-acid polypeptide reads, in one-letter code: Antitoxin PrlF (111 aa).

The 48-residue stretch at 12–59 (TTESKVTIRGQTTIPAPVREALKLKPGQDSIHYEILPGGQVFMCRLGD) folds into the SpoVT-AbrB domain.

In terms of assembly, homodimer; forms a complex with YhaV with stoichiometry PrlF(2)-YhaV(4), possibly as a YhaV(2)-PrlF(2)-YhaV(2) complex like the MazFE complex. This complex is seen to dimerize in solution.

The protein localises to the cytoplasm. Functionally, antitoxin component of a type II toxin-antitoxin (TA) system. Labile antitoxin that binds to the YhaV toxin and neutralizes its ribonuclease activity. Also acts as a transcription factor. The YhaV/PrlF complex binds the prlF-yhaV operon, probably negatively regulating its expression. Its function is as follows. Negatively regulates its own expression as well as relieving the export block imposed by high-level synthesis of the LamB-LacZ hybrid protein. Overexpression leads to increased doubling time and also suppresses a htrA (degP) null phenotype. The chain is Antitoxin PrlF (prlF) from Escherichia coli (strain K12).